We begin with the raw amino-acid sequence, 233 residues long: Uridylate kinase (233 aa).

ATP contacts are provided by residues 9–12 (KLSG), G51, and R55. UMP contacts are provided by residues D69 and 130-137 (TGNPFFST). 3 residues coordinate ATP: N158, Y164, and D167.

This sequence belongs to the UMP kinase family. Homohexamer.

It localises to the cytoplasm. The enzyme catalyses UMP + ATP = UDP + ADP. It functions in the pathway pyrimidine metabolism; CTP biosynthesis via de novo pathway; UDP from UMP (UMPK route): step 1/1. Inhibited by UTP. Functionally, catalyzes the reversible phosphorylation of UMP to UDP. In Thermus thermophilus (strain ATCC BAA-163 / DSM 7039 / HB27), this protein is Uridylate kinase.